The following is a 184-amino-acid chain: Probable RNA 2'-phosphotransferase (184 aa).

It belongs to the KptA/TPT1 family.

In terms of biological role, removes the 2'-phosphate from RNA via an intermediate in which the phosphate is ADP-ribosylated by NAD followed by a presumed transesterification to release the RNA and generate ADP-ribose 1''-2''-cyclic phosphate (APPR&gt;P). May function as an ADP-ribosylase. The chain is Probable RNA 2'-phosphotransferase from Burkholderia pseudomallei (strain K96243).